Here is a 78-residue protein sequence, read N- to C-terminus: Large ribosomal subunit protein bL28 (78 aa).

The segment at 1–20 (MSQVCQVTGKRPVVGNNRSH) is disordered.

Belongs to the bacterial ribosomal protein bL28 family.

The chain is Large ribosomal subunit protein bL28 from Idiomarina loihiensis (strain ATCC BAA-735 / DSM 15497 / L2-TR).